The sequence spans 430 residues: Probable sugar isomerase mlr5709 (430 aa).

The Mn(2+) site is built by His-257, Asp-289, and Asp-291.

This sequence belongs to the rhamnose isomerase family. Mn(2+) serves as cofactor.

The sequence is that of Probable sugar isomerase mlr5709 from Mesorhizobium japonicum (strain LMG 29417 / CECT 9101 / MAFF 303099) (Mesorhizobium loti (strain MAFF 303099)).